We begin with the raw amino-acid sequence, 104 residues long: N(4)-acetylcytidine amidohydrolase (104 aa).

An ASCH domain is found at 6–102 (ITFYQRFEAD…SEFWVIEIRL (97 aa)). K21 functions as the Proton acceptor in the catalytic mechanism. T24 (nucleophile) is an active-site residue. E74 (proton donor) is an active-site residue.

It belongs to the N(4)-acetylcytidine amidohydrolase family.

It carries out the reaction N(4)-acetylcytidine + H2O = cytidine + acetate + H(+). The catalysed reaction is N(4)-acetyl-2'-deoxycytidine + H2O = 2'-deoxycytidine + acetate + H(+). It catalyses the reaction N(4)-acetylcytosine + H2O = cytosine + acetate + H(+). Its function is as follows. Catalyzes the hydrolysis of N(4)-acetylcytidine (ac4C). The polypeptide is N(4)-acetylcytidine amidohydrolase (Haemophilus influenzae (strain PittEE)).